A 450-amino-acid chain; its full sequence is Tubulin alpha chain (450 aa).

A GTP-binding site is contributed by Gln-11. Position 40 is an N6-acetyllysine (Lys-40). GTP is bound by residues Glu-71, Ser-140, Gly-144, Thr-145, Thr-179, Asn-206, and Asn-228. A Mg(2+)-binding site is contributed by Glu-71. The active site involves Glu-254.

It belongs to the tubulin family. As to quaternary structure, dimer of alpha and beta chains. A typical microtubule is a hollow water-filled tube with an outer diameter of 25 nm and an inner diameter of 15 nM. Alpha-beta heterodimers associate head-to-tail to form protofilaments running lengthwise along the microtubule wall with the beta-tubulin subunit facing the microtubule plus end conferring a structural polarity. Microtubules usually have 13 protofilaments but different protofilament numbers can be found in some organisms and specialized cells. Mg(2+) serves as cofactor. In terms of processing, acetylation of alpha chains at Lys-40 stabilizes microtubules and affects affinity and processivity of microtubule motors. This modification has a role in multiple cellular functions, ranging from cell motility, cell cycle progression or cell differentiation to intracellular trafficking and signaling.

Its subcellular location is the cytoplasm. The protein localises to the cytoskeleton. It carries out the reaction GTP + H2O = GDP + phosphate + H(+). Its function is as follows. Tubulin is the major constituent of microtubules, a cylinder consisting of laterally associated linear protofilaments composed of alpha- and beta-tubulin heterodimers. Microtubules grow by the addition of GTP-tubulin dimers to the microtubule end, where a stabilizing cap forms. Below the cap, tubulin dimers are in GDP-bound state, owing to GTPase activity of alpha-tubulin. This Euplotes vannus (Marine ciliate) protein is Tubulin alpha chain.